The sequence spans 250 residues: V-type proton ATPase subunit D (250 aa).

This sequence belongs to the V-ATPase D subunit family. In terms of assembly, V-ATPase is a heteromultimeric enzyme made up of two complexes: the ATP-hydrolytic V1 complex and the proton translocation V0 complex. The V1 complex consists of three catalytic AB heterodimers that form a heterohexamer, three peripheral stalks each consisting of EG heterodimers, one central rotor including subunits D and F, and the regulatory subunits C and H. The proton translocation complex V0 consists of the proton transport subunit a, a ring of proteolipid subunits c9c'', rotary subunit d, subunits e and f, and two accessory subunits ATP6AP1/Ac45 and ATP6AP2/PRR.

Subunit of the V1 complex of vacuolar(H+)-ATPase (V-ATPase), a multisubunit enzyme composed of a peripheral complex (V1) that hydrolyzes ATP and a membrane integral complex (V0) that translocates protons. V-ATPase is responsible for acidifying and maintaining the pH of intracellular compartments and in some cell types, is targeted to the plasma membrane, where it is responsible for acidifying the extracellular environment. This is V-type proton ATPase subunit D (VATPD) from Suberites domuncula (Sponge).